Reading from the N-terminus, the 502-residue chain is Glycerol kinase (502 aa).

T14 is an ADP binding site. Positions 14, 15, and 16 each coordinate ATP. T14 is a binding site for sn-glycerol 3-phosphate. R18 is an ADP binding site. Positions 84, 85, 136, and 246 each coordinate sn-glycerol 3-phosphate. R84, E85, Y136, D246, and Q247 together coordinate glycerol. Residues T268 and G311 each coordinate ADP. Residues T268, G311, Q315, and G412 each coordinate ATP. Positions 412 and 416 each coordinate ADP.

This sequence belongs to the FGGY kinase family. Homotetramer and homodimer (in equilibrium). Heterodimer with EIIA-Glc. Binds 1 zinc ion per glycerol kinase EIIA-Glc dimer. The zinc ion is important for dimerization.

It catalyses the reaction glycerol + ATP = sn-glycerol 3-phosphate + ADP + H(+). It participates in polyol metabolism; glycerol degradation via glycerol kinase pathway; sn-glycerol 3-phosphate from glycerol: step 1/1. With respect to regulation, activity of this regulatory enzyme is affected by several metabolites. Allosterically and non-competitively inhibited by fructose 1,6-bisphosphate (FBP) and unphosphorylated phosphocarrier protein EIIA-Glc (III-Glc), an integral component of the bacterial phosphotransferase (PTS) system. In terms of biological role, key enzyme in the regulation of glycerol uptake and metabolism. Catalyzes the phosphorylation of glycerol to yield sn-glycerol 3-phosphate. The protein is Glycerol kinase of Enterobacter sp. (strain 638).